Reading from the N-terminus, the 90-residue chain is Small ribosomal subunit protein uS15c (90 aa).

It belongs to the universal ribosomal protein uS15 family. As to quaternary structure, part of the 30S ribosomal subunit.

It is found in the plastid. The protein resides in the chloroplast. This Populus alba (White poplar) protein is Small ribosomal subunit protein uS15c (rps15).